The chain runs to 180 residues: Protein GrpE (180 aa).

The segment covering 1 to 19 has biased composition (basic and acidic residues); it reads MAEKKRAQEQEKVQEDQKM. A disordered region spans residues 1-25; that stretch reads MAEKKRAQEQEKVQEDQKMQNEQNE.

Belongs to the GrpE family. As to quaternary structure, homodimer.

Its subcellular location is the cytoplasm. Participates actively in the response to hyperosmotic and heat shock by preventing the aggregation of stress-denatured proteins, in association with DnaK and GrpE. It is the nucleotide exchange factor for DnaK and may function as a thermosensor. Unfolded proteins bind initially to DnaJ; upon interaction with the DnaJ-bound protein, DnaK hydrolyzes its bound ATP, resulting in the formation of a stable complex. GrpE releases ADP from DnaK; ATP binding to DnaK triggers the release of the substrate protein, thus completing the reaction cycle. Several rounds of ATP-dependent interactions between DnaJ, DnaK and GrpE are required for fully efficient folding. In Nitratiruptor sp. (strain SB155-2), this protein is Protein GrpE.